A 321-amino-acid chain; its full sequence is Phospho-N-acetylmuramoyl-pentapeptide-transferase (321 aa).

Transmembrane regions (helical) follow at residues 6-26, 53-73, 77-97, 121-141, 144-164, 175-195, 200-220, 226-246, 251-271, and 301-321; these read MLIPMVSAFAITIMFMPLFIG, TMGGLIFIAAIIVSAIWVGIW, LTLSVWVSLFILVLYGLLGFY, ILGAIIFLIAYFHEGFDHTLW, IIGNVSAAWFYVLFVIVWLVG, LDGLVAGQTTISFGTYAIIAA, TDVLIVCLVTIGAMLGFLMFN, IFMGDLGSLALGGMLAVVAIL, WSLLLIGIIYVTETASVILQV, and IDLTFWLVGLIGSGIYLAFFL.

The protein belongs to the glycosyltransferase 4 family. MraY subfamily. Mg(2+) is required as a cofactor.

The protein localises to the cell membrane. The catalysed reaction is UDP-N-acetyl-alpha-D-muramoyl-L-alanyl-gamma-D-glutamyl-L-lysyl-D-alanyl-D-alanine + di-trans,octa-cis-undecaprenyl phosphate = Mur2Ac(oyl-L-Ala-gamma-D-Glu-L-Lys-D-Ala-D-Ala)-di-trans,octa-cis-undecaprenyl diphosphate + UMP. The protein operates within cell wall biogenesis; peptidoglycan biosynthesis. Its function is as follows. Catalyzes the initial step of the lipid cycle reactions in the biosynthesis of the cell wall peptidoglycan: transfers peptidoglycan precursor phospho-MurNAc-pentapeptide from UDP-MurNAc-pentapeptide onto the lipid carrier undecaprenyl phosphate, yielding undecaprenyl-pyrophosphoryl-MurNAc-pentapeptide, known as lipid I. The sequence is that of Phospho-N-acetylmuramoyl-pentapeptide-transferase from Lacticaseibacillus paracasei (strain ATCC 334 / BCRC 17002 / CCUG 31169 / CIP 107868 / KCTC 3260 / NRRL B-441) (Lactobacillus paracasei).